Consider the following 274-residue polypeptide: ATP synthase subunit delta (274 aa).

It belongs to the ATPase delta chain family. F-type ATPases have 2 components, F(1) - the catalytic core - and F(0) - the membrane proton channel. F(1) has five subunits: alpha(3), beta(3), gamma(1), delta(1), epsilon(1). F(0) has three main subunits: a(1), b(2) and c(10-14). The alpha and beta chains form an alternating ring which encloses part of the gamma chain. F(1) is attached to F(0) by a central stalk formed by the gamma and epsilon chains, while a peripheral stalk is formed by the delta and b chains.

It localises to the cell membrane. F(1)F(0) ATP synthase produces ATP from ADP in the presence of a proton or sodium gradient. F-type ATPases consist of two structural domains, F(1) containing the extramembraneous catalytic core and F(0) containing the membrane proton channel, linked together by a central stalk and a peripheral stalk. During catalysis, ATP synthesis in the catalytic domain of F(1) is coupled via a rotary mechanism of the central stalk subunits to proton translocation. Functionally, this protein is part of the stalk that links CF(0) to CF(1). It either transmits conformational changes from CF(0) to CF(1) or is implicated in proton conduction. The sequence is that of ATP synthase subunit delta from Corynebacterium efficiens (strain DSM 44549 / YS-314 / AJ 12310 / JCM 11189 / NBRC 100395).